A 631-amino-acid chain; its full sequence is Phosphomethylpyrimidine synthase (631 aa).

Residues Asn239, Met268, Tyr297, His333, 353–355, 394–397, and Glu433 each bind substrate; these read SRG and DGLR. His437 contacts Zn(2+). A substrate-binding site is contributed by Tyr460. Residue His501 coordinates Zn(2+). Residues Cys581, Cys584, and Cys589 each coordinate [4Fe-4S] cluster.

Belongs to the ThiC family. As to quaternary structure, homodimer. It depends on [4Fe-4S] cluster as a cofactor.

The catalysed reaction is 5-amino-1-(5-phospho-beta-D-ribosyl)imidazole + S-adenosyl-L-methionine = 4-amino-2-methyl-5-(phosphooxymethyl)pyrimidine + CO + 5'-deoxyadenosine + formate + L-methionine + 3 H(+). It participates in cofactor biosynthesis; thiamine diphosphate biosynthesis. Catalyzes the synthesis of the hydroxymethylpyrimidine phosphate (HMP-P) moiety of thiamine from aminoimidazole ribotide (AIR) in a radical S-adenosyl-L-methionine (SAM)-dependent reaction. This is Phosphomethylpyrimidine synthase from Escherichia coli O81 (strain ED1a).